Reading from the N-terminus, the 98-residue chain is MQRSCNEKEGKPKCSEPKREEEHPYGAFEGQRLEGNFRQRLLQSLEEFKEDIDYRHFKGEEMTGEEEEMERCLEEIRSLRKKFRALHSNRTHSRDRPF.

The segment covering 1–24 (MQRSCNEKEGKPKCSEPKREEEHP) has biased composition (basic and acidic residues). The segment at 1 to 31 (MQRSCNEKEGKPKCSEPKREEEHPYGAFEGQ) is disordered. Positions 59 to 89 (GEEMTGEEEEMERCLEEIRSLRKKFRALHSN) form a coiled coil.

It belongs to the TFS-II family. TFA subfamily.

It is found in the nucleus. Plays a role in the negative regulation of NF-kappa-B signaling at the basal level by modulating transcriptional activity of NF-kappa-B on its target gene promoters. Associates with cyclin D1 promoter containing Myc E-box sequence and transcriptionally represses cyclin D1 expression. Regulates telomerase reverse transcriptase expression and telomerase activity in both ALT (alternative lengthening of telomeres)and telomerase-positive cell lines. In Rattus norvegicus (Rat), this protein is Transcription elongation factor A protein-like 7 (Tceal7).